We begin with the raw amino-acid sequence, 79 residues long: Small ribosomal subunit protein bS18 (79 aa).

It belongs to the bacterial ribosomal protein bS18 family. Part of the 30S ribosomal subunit. Forms a tight heterodimer with protein bS6.

Its function is as follows. Binds as a heterodimer with protein bS6 to the central domain of the 16S rRNA, where it helps stabilize the platform of the 30S subunit. The sequence is that of Small ribosomal subunit protein bS18 from Streptococcus thermophilus (strain CNRZ 1066).